A 165-amino-acid chain; its full sequence is Small ribosomal subunit protein eS10 (165 aa).

The disordered stretch occupies residues Ala-92–Gln-165. A compositionally biased stretch (basic and acidic residues) spans Ser-97–Arg-128. The segment covering Ala-142–Arg-153 has biased composition (low complexity). Residues Gly-154–Gln-165 are compositionally biased toward gly residues.

Belongs to the eukaryotic ribosomal protein eS10 family. Component of the small ribosomal subunit.

Its subcellular location is the cytoplasm. It localises to the nucleus. It is found in the nucleolus. Functionally, component of the 40S ribosomal subunit. The ribosome is a large ribonucleoprotein complex responsible for the synthesis of proteins in the cell. The sequence is that of Small ribosomal subunit protein eS10 (rps10) from Xenopus laevis (African clawed frog).